We begin with the raw amino-acid sequence, 225 residues long: PKHD-type hydroxylase YbiX (225 aa).

In terms of domain architecture, Fe2OG dioxygenase spans T78 to S177. Fe cation-binding residues include H96, D98, and H158. R168 lines the 2-oxoglutarate pocket.

The cofactor is Fe(2+). L-ascorbate serves as cofactor.

The chain is PKHD-type hydroxylase YbiX from Escherichia coli O8 (strain IAI1).